The sequence spans 597 residues: MDHIRNFSIIAHIDHGKSTLADRIIQICGGLSDREMESQVLDSMDLERERGITIKAQTAALTYKARNGEVYNLNMIDTPGHVDFSYEVSRSLSACEGALLVVDASQGVEAQTVANCYTAIELGVDVIPVLNKIDLPAANPENAIAEIEDVIGIDATDATHCSAKTGLGVEDVLEALVAKVPPPKGDPEAPLQALIIDSWFDNYVGVVMLVRIVNGTLRPKDKIRMMATGAQYPVEHVGVFTPKSKNLESLSAGQVGFIIAGIKELAAAKVGDTVTLVNRPAPEPLPGFKEVKPQVFAGLYPVEANQYDALRDSLEKLKLNDASLMYEPEVSQALGFGFRCGFLGLLHMEIVQERLEREFDMDLITTAPTVVYEVLQRDGTTIMVENPAKMPEPSKIEEVREPIVTVNLYMPQDYVGSVITLCTQKRGTQINMQYHGRQVQLTYEIPMGEVVLDFFDRLKSISRGYASMDYEFKEYRAADVVKVDMLINGDKVDALSVIVHRSQSQYRGREVAAKMRELIPRQMYDVAIQATIGANIIARENIKALRKNVLAKCYGGDISRKKKLLEKQKAGKKRMKQVGSVEIPQEAFLAILRVEDK.

The region spanning Asp2–Lys184 is the tr-type G domain. GTP is bound by residues Asp14 to Thr19 and Asn131 to Asp134.

The protein belongs to the TRAFAC class translation factor GTPase superfamily. Classic translation factor GTPase family. LepA subfamily.

It is found in the cell inner membrane. The enzyme catalyses GTP + H2O = GDP + phosphate + H(+). In terms of biological role, required for accurate and efficient protein synthesis under certain stress conditions. May act as a fidelity factor of the translation reaction, by catalyzing a one-codon backward translocation of tRNAs on improperly translocated ribosomes. Back-translocation proceeds from a post-translocation (POST) complex to a pre-translocation (PRE) complex, thus giving elongation factor G a second chance to translocate the tRNAs correctly. Binds to ribosomes in a GTP-dependent manner. The sequence is that of Elongation factor 4 from Paraburkholderia phytofirmans (strain DSM 17436 / LMG 22146 / PsJN) (Burkholderia phytofirmans).